A 532-amino-acid chain; its full sequence is Pentatricopeptide repeat-containing protein At5g66500, mitochondrial (532 aa).

Residues 1–33 (MFACLRIGRFIRLGNVTVKSTNLVLRCVFIRNF) constitute a mitochondrion transit peptide. 12 PPR repeats span residues 48-82 (DLSSLNSQLSSHLRSGNPNDTLALFLQIHRASPDL), 83-117 (SSHTFTPVLGACSLLSYPETGRQVHALMIKQGAET), 118-148 (GTISKTALIDMYSKYGHLVDSVRVFESVEEK), 149-183 (DLVSWNALLSGFLRNGKGKEALGVFAAMYRERVEI), 184-218 (SEFTLSSVVKTCASLKILQQGKQVHAMVVVTGRDL), 223-248 (TAMISFYSSVGLINEAMKVYNSLNVH), 250-280 (DEVMLNSLISGCIRNRNYKEAFLLMSRQRPN), 281-314 (VRVLSSSLAGCSDNSDLWIGKQIHCVALRNGFVS), 315-345 (DSKLCNGLMDMYGKCGQIVQARTIFRAIPSK), 346-380 (SVVSWTSMIDAYAVNGDGVKALEIFREMCEEGSGV), 383-413 (NSVTFLVVISACAHAGLVKEGKECFGMMKEK), and 419-453 (GTEHYVCFIDILSKAGETEEIWRLVERMMENDNQS). The type E motif; degenerate stretch occupies residues 458 to 532 (IWVAVLSACS…VKTAGHSLFI (75 aa)).

Belongs to the PPR family. PCMP-E subfamily.

The protein resides in the mitochondrion. This Arabidopsis thaliana (Mouse-ear cress) protein is Pentatricopeptide repeat-containing protein At5g66500, mitochondrial (PCMP-E38).